A 490-amino-acid polypeptide reads, in one-letter code: Sulfate adenylyltransferase (490 aa).

The tract at residues 1 to 165 (MTKALLKDLN…LQAVTPIRHF (165 aa)) is N-terminal. The interval 166-390 (DFVEYRYSPA…LRQSYPPKYS (225 aa)) is catalytic. Glutamine 193 is a sulfate binding site. Residues 193–196 (QTRN) and 287–290 (GRDH) contribute to the ATP site. Residues threonine 194, arginine 195, and asparagine 196 contribute to the active site. Arginine 195 is a binding site for sulfate. Alanine 291 provides a ligand contact to sulfate. Methionine 329 lines the ATP pocket. At threonine 356 the chain carries Phosphothreonine. The tract at residues 391-490 (QGFVLAVPAT…LSQLSDEGYL (100 aa)) is required for oligomerization; adenylyl-sulfate kinase-like.

It belongs to the sulfate adenylyltransferase family. In terms of assembly, homohexamer. Dimer of trimers.

The protein localises to the cytoplasm. The catalysed reaction is sulfate + ATP + H(+) = adenosine 5'-phosphosulfate + diphosphate. The protein operates within sulfur metabolism; hydrogen sulfide biosynthesis; sulfite from sulfate: step 1/3. Its function is as follows. Catalyzes the first intracellular reaction of sulfate assimilation, forming adenosine-5'-phosphosulfate (APS) from inorganic sulfate and ATP. Plays an important role in sulfate activation as a component of the biosynthesis pathway of sulfur-containing amino acids. This Schizosaccharomyces pombe (strain 972 / ATCC 24843) (Fission yeast) protein is Sulfate adenylyltransferase (sua1).